A 417-amino-acid chain; its full sequence is NADH-quinone oxidoreductase subunit D (417 aa).

It belongs to the complex I 49 kDa subunit family. In terms of assembly, NDH-1 is composed of 14 different subunits. Subunits NuoB, C, D, E, F, and G constitute the peripheral sector of the complex.

The protein localises to the cell inner membrane. It carries out the reaction a quinone + NADH + 5 H(+)(in) = a quinol + NAD(+) + 4 H(+)(out). In terms of biological role, NDH-1 shuttles electrons from NADH, via FMN and iron-sulfur (Fe-S) centers, to quinones in the respiratory chain. The immediate electron acceptor for the enzyme in this species is believed to be ubiquinone. Couples the redox reaction to proton translocation (for every two electrons transferred, four hydrogen ions are translocated across the cytoplasmic membrane), and thus conserves the redox energy in a proton gradient. The polypeptide is NADH-quinone oxidoreductase subunit D (Cupriavidus taiwanensis (strain DSM 17343 / BCRC 17206 / CCUG 44338 / CIP 107171 / LMG 19424 / R1) (Ralstonia taiwanensis (strain LMG 19424))).